The following is a 273-amino-acid chain: Ribonuclease Z (273 aa).

H61, H63, H146, D169, and H233 together coordinate Zn(2+).

Belongs to the RNase Z family. As to quaternary structure, homodimer. Zn(2+) serves as cofactor.

It carries out the reaction Endonucleolytic cleavage of RNA, removing extra 3' nucleotides from tRNA precursor, generating 3' termini of tRNAs. A 3'-hydroxy group is left at the tRNA terminus and a 5'-phosphoryl group is left at the trailer molecule.. Functionally, zinc phosphodiesterase, which displays some tRNA 3'-processing endonuclease activity. Probably involved in tRNA maturation, by removing a 3'-trailer from precursor tRNA. The chain is Ribonuclease Z from Mycobacterium tuberculosis (strain ATCC 25177 / H37Ra).